The chain runs to 167 residues: G/U mismatch-specific DNA glycosylase (167 aa).

Belongs to the uracil-DNA glycosylase (UDG) superfamily. TDG/mug family. Binds DNA as a monomer.

It localises to the cytoplasm. The catalysed reaction is Specifically hydrolyzes mismatched double-stranded DNA and polynucleotides, releasing free uracil.. In terms of biological role, excises ethenocytosine and uracil, which can arise by alkylation or deamination of cytosine, respectively, from the corresponding mispairs with guanine in ds-DNA. It is capable of hydrolyzing the carbon-nitrogen bond between the sugar-phosphate backbone of the DNA and the mispaired base. The complementary strand guanine functions in substrate recognition. Required for DNA damage lesion repair in stationary-phase cells. This chain is G/U mismatch-specific DNA glycosylase, found in Pectobacterium atrosepticum (strain SCRI 1043 / ATCC BAA-672) (Erwinia carotovora subsp. atroseptica).